Consider the following 626-residue polypeptide: Colicin-Ia (626 aa).

The tract at residues 23–225 is translocation (T); the sequence is EIMAVDIYVN…TRLSELEKNG (203 aa). Positions 276–286 are enriched in polar residues; the sequence is QQLTQQKNTPD. The segment at 276-308 is disordered; sequence QQLTQQKNTPDGKTIVSPEKFPGRSSTNHSIVV. A receptor-binding (R) region spans residues 282–385; that stretch reads KNTPDGKTIV…LRQRLLDARN (104 aa). The segment at 450–626 is channel (C); the sequence is KDAINFTTEF…VEKANKFWGI (177 aa). 2 helical membrane passes run 580–594 and 597–612; these read ATAL…LTGS and GIIG…GALI.

The protein belongs to the channel forming colicin family.

It is found in the cell membrane. Its function is as follows. This colicin is a channel-forming colicin. This class of transmembrane toxins depolarize the cytoplasmic membrane, leading to dissipation of cellular energy. In terms of biological role, colicins are polypeptide toxins produced by and active against E.coli and closely related bacteria. This Escherichia coli protein is Colicin-Ia (cia).